We begin with the raw amino-acid sequence, 273 residues long: Type IV secretion system protein PtlF homolog (273 aa).

The N-terminal stretch at 1 to 20 (MMAARMMAAGLAATALSAHA) is a signal peptide.

Belongs to the TrbG/VirB9 family.

Its subcellular location is the cell outer membrane. The polypeptide is Type IV secretion system protein PtlF homolog (ptlF) (Bordetella bronchiseptica (strain ATCC BAA-588 / NCTC 13252 / RB50) (Alcaligenes bronchisepticus)).